The primary structure comprises 83 residues: Exodeoxyribonuclease 7 small subunit (83 aa).

It belongs to the XseB family. As to quaternary structure, heterooligomer composed of large and small subunits.

The protein localises to the cytoplasm. The enzyme catalyses Exonucleolytic cleavage in either 5'- to 3'- or 3'- to 5'-direction to yield nucleoside 5'-phosphates.. Bidirectionally degrades single-stranded DNA into large acid-insoluble oligonucleotides, which are then degraded further into small acid-soluble oligonucleotides. This Rhizobium leguminosarum bv. trifolii (strain WSM2304) protein is Exodeoxyribonuclease 7 small subunit.